The sequence spans 312 residues: MKWSEISIHTTEEAVEAVSHILHEAGASGVAIEDPAELTKEREQQYGEIYALNPDEYPAEGVLIKAYFPQTDSLHETIAGVKSSIDVLPSYDIEIGTGNITVNEVNEEDWATAWKKYYHPVQISDTFTIVPTWEEYTPSSPDEKIIELDPGMAFGTGTHPTTTMCIRALEKTVQPGDAIIDVGTGSGVLSIAAAKLGASSVQAYDLDPVAVESAEMNVRLNKTDDIVSVGQNSLLEGIEGPVDLIVANLLAEIILLFPEDAARVVKSGGLFITSGIIAAKEKVISEALEQAGFTIEEVLRMEDWVAIIARNA.

S-adenosyl-L-methionine-binding residues include Thr-162, Gly-183, Asp-205, and Asn-248.

It belongs to the methyltransferase superfamily. PrmA family.

The protein localises to the cytoplasm. The enzyme catalyses L-lysyl-[protein] + 3 S-adenosyl-L-methionine = N(6),N(6),N(6)-trimethyl-L-lysyl-[protein] + 3 S-adenosyl-L-homocysteine + 3 H(+). In terms of biological role, methylates ribosomal protein L11. The protein is Ribosomal protein L11 methyltransferase of Bacillus cereus (strain G9842).